Here is a 496-residue protein sequence, read N- to C-terminus: Costunolide synthase (496 aa).

A helical; Signal-anchor for type II membrane protein transmembrane segment spans residues 4-24 (FTIFSLVVASLVFFACWALVA). 4 N-linked (GlcNAc...) asparagine glycosylation sites follow: Asn26, Asn168, Asn280, and Asn412. Heme is bound at residue Cys434.

It belongs to the cytochrome P450 family. Heme serves as cofactor. As to expression, expressed in floral glandular trichomes.

The protein resides in the membrane. The catalysed reaction is germacra-1(10),4,11(13)-trien-12-oate + reduced [NADPH--hemoprotein reductase] + O2 = (+)-costunolide + oxidized [NADPH--hemoprotein reductase] + 2 H2O. It participates in secondary metabolite biosynthesis; terpenoid biosynthesis. Involved in the biosynthesis of germacrene-derived sesquiterpene lactones. Component of the parthenolide biosynthetic pathway; parthenolide and conjugates are promising anti-cancer drugs highly active against colon cancer cells. Hydroxylates germacrene A acid to 6-alpha-hydroxy-germacrene A acid, a precursor of sesquiterpene lactones that spontaneously undergoes a lactonization which yields costunolide. The polypeptide is Costunolide synthase (Tanacetum parthenium (Feverfew)).